Here is a 432-residue protein sequence, read N- to C-terminus: Killer cell immunoglobulin-like receptor 3DL1 (432 aa).

The signal sequence occupies residues 1–21 (MLLWFLSLVCSGFFLVQRMSA). Residues 22–335 (HVGSHDKPFL…ADTKTNNYKN (314 aa)) are Extracellular-facing. 3 Ig-like C2-type domains span residues 42-100 (GQNV…HPQY), 135-202 (GGNV…NSYY), and 238-301 (GETM…FRNA). A glycan (N-linked (GlcNAc...) asparagine) is linked at asparagine 44. Cysteine 49 and cysteine 95 are oxidised to a cystine. A glycan (N-linked (GlcNAc...) asparagine) is linked at asparagine 137. 2 disulfide bridges follow: cysteine 142/cysteine 195 and cysteine 245/cysteine 294. The N-linked (GlcNAc...) asparagine glycan is linked to asparagine 300. The helical transmembrane segment at 336–356 (LHILTGLLVTMVLVVIIIFYS) threads the bilayer. Residues 357 to 432 (CYFSKQNKSQ…DTIVYMEIMK (76 aa)) lie on the Cytoplasmic side of the membrane.

It belongs to the immunoglobulin superfamily.

The protein resides in the cell membrane. Receptor on natural killer (NK) cells. Inhibits the activity of NK cells thus preventing cell lysis. In Mus musculus (Mouse), this protein is Killer cell immunoglobulin-like receptor 3DL1 (Kir3dl1).